The chain runs to 756 residues: Zinc finger and BTB domain-containing protein 49 (756 aa).

In terms of domain architecture, BTB spans Cys-25–Gln-91. Disordered stretches follow at residues Ala-176 to Cys-197, Pro-226 to Pro-290, and Ser-311 to Ala-379. Over residues Pro-226–Thr-242 the composition is skewed to polar residues. 2 stretches are compositionally biased toward basic and acidic residues: residues Ser-319–Glu-341 and Ala-348–Glu-365. C2H2-type zinc fingers lie at residues Tyr-386–His-408, Phe-414–His-436, Tyr-442–His-464, His-470–His-492, Phe-498–His-520, Tyr-526–His-548, and Tyr-554–His-576.

Belongs to the krueppel C2H2-type zinc-finger protein family. In terms of assembly, interacts with EP300, KAT5/Tip60 and ZBTB17. The interaction with EP300 is direct and leads to synergistic induction of CDKN1A. On the CDKN1A promoter, forms a complex with ZBTB17; this interaction leads to additive CDKN1A transactivation. The interaction with ZBTB17 may block ZBTB17 repressor activity. Widely expressed, with highest levels in white adipose tissue and kidney, intermediate levels in brain, liver and heart, and lowest levels in spleen, brown adipose tissue and muscle.

It is found in the cytoplasm. Its subcellular location is the nucleus. In terms of biological role, transcription factor. Inhibits cell proliferation by activating either CDKN1A/p21 transcription or RB1 transcription. This Mus musculus (Mouse) protein is Zinc finger and BTB domain-containing protein 49 (Zbtb49).